The sequence spans 365 residues: MSEEREAPGPLASSSAGLGAEVGQEEVPGGAGPARLLLLPSDSDGPPKKRLRSEAEPGSVRLEERLYSVLCCTVCLDLPKASVYQCTNGHLMCAGCFIHLLADSRLKEEQATCPNCRCEISKSLCCRNLAVEKAVSELPSDCGFCLKQFPRSLLERHKKEECQDRVTQCKYKRIGCPWEGPYHELTVHESECCHPTKTGNELMEILDEMDQTHKKEMQLYNSIFSLLSFEKIGYTEVQFRPYRTDDFITRLYYETPRFTVLNQTWVLKARVNDSERNPNLSCKRTLSFQLILKSKINSPMECSFLLLKGPYDDVKIHPVIYHFVFTNENNETEYVPLPIIDSVECNKLLAAKNINLRLFIFQIQK.

The tract at residues 1–56 (MSEEREAPGPLASSSAGLGAEVGQEEVPGGAGPARLLLLPSDSDGPPKKRLRSEAE) is disordered. Residues 72–117 (CTVCLDLPKASVYQCTNGHLMCAGCFIHLLADSRLKEEQATCPNCR) form an RING-type; degenerate zinc finger. The segment at 113–186 (CPNCRCEISK…PWEGPYHELT (74 aa)) adopts a TRAF-type zinc-finger fold.

Belongs to the ZFTRAF1 family.

The protein localises to the cytoplasm. This chain is Zinc finger TRAF-type-containing protein 1-A, found in Xenopus laevis (African clawed frog).